We begin with the raw amino-acid sequence, 130 residues long: Small ribosomal subunit protein uS8 (130 aa).

Belongs to the universal ribosomal protein uS8 family. Part of the 30S ribosomal subunit.

One of the primary rRNA binding proteins, it binds directly to 16S rRNA central domain where it helps coordinate assembly of the platform of the 30S subunit. This is Small ribosomal subunit protein uS8 from Thermococcus gammatolerans (strain DSM 15229 / JCM 11827 / EJ3).